Consider the following 328-residue polypeptide: tRNA dimethylallyltransferase (328 aa).

25–32 (GNTGSGKS) is a binding site for ATP. 27–32 (TGSGKS) is a substrate binding site. The tract at residues 50 to 53 (DSRQ) is interaction with substrate tRNA.

The protein belongs to the IPP transferase family. Monomer. The cofactor is Mg(2+).

It catalyses the reaction adenosine(37) in tRNA + dimethylallyl diphosphate = N(6)-dimethylallyladenosine(37) in tRNA + diphosphate. Its function is as follows. Catalyzes the transfer of a dimethylallyl group onto the adenine at position 37 in tRNAs that read codons beginning with uridine, leading to the formation of N6-(dimethylallyl)adenosine (i(6)A). The protein is tRNA dimethylallyltransferase of Dehalococcoides mccartyi (strain ATCC BAA-2100 / JCM 16839 / KCTC 5957 / BAV1).